We begin with the raw amino-acid sequence, 152 residues long: 3-hydroxyacyl-[acyl-carrier-protein] dehydratase FabZ (152 aa).

Histidine 57 is a catalytic residue.

It belongs to the thioester dehydratase family. FabZ subfamily.

The protein localises to the cytoplasm. The catalysed reaction is a (3R)-hydroxyacyl-[ACP] = a (2E)-enoyl-[ACP] + H2O. In terms of biological role, involved in unsaturated fatty acids biosynthesis. Catalyzes the dehydration of short chain beta-hydroxyacyl-ACPs and long chain saturated and unsaturated beta-hydroxyacyl-ACPs. In Bradyrhizobium sp. (strain BTAi1 / ATCC BAA-1182), this protein is 3-hydroxyacyl-[acyl-carrier-protein] dehydratase FabZ.